The following is a 231-amino-acid chain: Sensory transduction protein BceR (231 aa).

Residues 3–116 (KIMLIEDDHT…VLVAKIQAIL (114 aa)) form the Response regulatory domain. A 4-aspartylphosphate modification is found at aspartate 52. Positions 127-225 (TQLKTWCGAT…KVGQGYMAKE (99 aa)) form a DNA-binding region, ompR/PhoB-type.

Phosphorylated by BceS.

Its subcellular location is the cytoplasm. Functionally, member of the two-component regulatory system BceS/BceR involved in the regulation of bacitracin resistance. When activated by BceS, binds to the upstream region of the bceAB promoter and up-regulates the expression of these two genes. The polypeptide is Sensory transduction protein BceR (bceR) (Halalkalibacterium halodurans (strain ATCC BAA-125 / DSM 18197 / FERM 7344 / JCM 9153 / C-125) (Bacillus halodurans)).